The sequence spans 710 residues: MNPLRSIQHNITTPPISGGQPLDAVGPQAQQSHPKRISPSQLSQSAHQALERLSANAEHQRLASLVRNALQDGTFQFQSSNHTQVTYKASICLPADTDTVRTDHLINNELTVQARLNDQSEYDIVSAHLHGSSKAISFDVPSPPPAHGSASSVLSERTHLGMSSVLSQDAVDSSSLETPLVSSPDHSRPPSQPKPVHIGSVRRDSGSLVSDNPVVQALLSFVQADQAFPPQAASIAGVQLEMRSRRDIEQALEELKGAFTVEKAQLMSGGSSSERVDEDVNADIHIPLLLKAIERGAGAFGPGALIEIADGGQISAKAFLASCAPTITSNDDVLSEFINQKLKGDDDLQVRLGAQELLHVATKKEFQLGGLAGSIGVSSILGSAWELGASELLKNAIFGKNFSPSQYALQLAGIDSVPPFIIEAMDSFCVLVIIKGMKGELWSMKDLLPKALKAGAISSAMSFPNNVLQYAGFKSRVADLAANSITTEAAIFGAASGIPPEVKESEELMRAGLFQSMKDGVMAHPGEGMDTKETIERMTRHALDIAPGESTAVKSMGLAAIVGMIPLIASSKATGLVSEQILRIFRNAVFNPIEAIALNALALGGRVNVPGLFDSDNAKHARVAQTILARASQHMEAGDREISAEELHQMLAPRSEFLRHVGSAIVNGMNASFEAIPALVRKLGYGEAPLAERIPYQDLAVPDTSRQPAP.

A compositionally biased stretch (polar residues) spans methionine 1 to proline 15. 3 disordered regions span residues methionine 1–arginine 36, isoleucine 136–serine 155, and serine 173–serine 207.

It is found in the secreted. Its function is as follows. Effector protein involved in non-host recognition and able to elicit hypersensitive response (HR). The protein is Effector protein AvrPphD (avrPphD) of Pseudomonas savastanoi pv. phaseolicola (Pseudomonas syringae pv. phaseolicola).